Here is a 497-residue protein sequence, read N- to C-terminus: Uridine 5'-monophosphate synthase (497 aa).

The segment at 8 to 226 (TRNGALKRNL…KLEINSELEN (219 aa)) is OPRTase. The segment at 227–232 (LSSLPY) is domain linker. Residues 233-496 (VENVRTPLAE…WDALTRSDDS (264 aa)) are OMPdecase. UMP is bound by residues Asp-271 and 293–295 (KLH). Lys-293 contacts orotidine 5'-phosphate. Catalysis depends on for OMPdecase activity residues Asp-324, Lys-326, and Asp-329. Residues Lys-326, Asp-329, Thr-333, Ser-387, 446-448 (QQW), and 466-467 (GR) contribute to the orotidine 5'-phosphate site. Residues Asp-329, Thr-333, Ser-387, 446-448 (QQW), and 466-467 (GR) each bind UMP.

The protein in the N-terminal section; belongs to the purine/pyrimidine phosphoribosyltransferase family. In the C-terminal section; belongs to the OMP decarboxylase family. As to expression, expressed in intestine and in neurons near the nerve ring and rectum.

The protein localises to the cytoplasm. The enzyme catalyses orotidine 5'-phosphate + diphosphate = orotate + 5-phospho-alpha-D-ribose 1-diphosphate. It catalyses the reaction orotidine 5'-phosphate + H(+) = UMP + CO2. It functions in the pathway pyrimidine metabolism; UMP biosynthesis via de novo pathway; UMP from orotate: step 1/2. Its pathway is pyrimidine metabolism; UMP biosynthesis via de novo pathway; UMP from orotate: step 2/2. Functionally, bifunctional enzyme which catalyzes the formation of UMP from orotate in the de novo pathway of pyrimidine biosynthesis. May also form UMP from uracil. Regulates the size of gut granules during embryonic development. Involved in resistance to DNA damaging agents including UV-C and X-ray radiation. The sequence is that of Uridine 5'-monophosphate synthase from Caenorhabditis elegans.